Reading from the N-terminus, the 185-residue chain is Ribosome-recycling factor (185 aa).

This sequence belongs to the RRF family.

Its subcellular location is the cytoplasm. In terms of biological role, responsible for the release of ribosomes from messenger RNA at the termination of protein biosynthesis. May increase the efficiency of translation by recycling ribosomes from one round of translation to another. In Finegoldia magna (strain ATCC 29328 / DSM 20472 / WAL 2508) (Peptostreptococcus magnus), this protein is Ribosome-recycling factor.